Consider the following 680-residue polypeptide: Harmonin-binding protein USHBP1 (680 aa).

Positions Met1–His15 are enriched in basic residues. Disordered regions lie at residues Met1–Glu101, Pro135–Glu162, and Ala217–Met250. Positions Pro76 to Ala86 are enriched in basic and acidic residues. Coiled coils occupy residues Leu177–Pro219, Ala362–Asp386, and Leu479–Gln506. Residues Leu524–Met562 form a disordered region. Positions Gln573–Thr661 form a coiled coil.

The protein belongs to the MCC family. As to quaternary structure, interacts via its C-terminus with the first PDZ domain of USH1C.

This chain is Harmonin-binding protein USHBP1, found in Rattus norvegicus (Rat).